Here is a 261-residue protein sequence, read N- to C-terminus: UPF0246 protein azo1887 (261 aa).

It belongs to the UPF0246 family.

This Azoarcus sp. (strain BH72) protein is UPF0246 protein azo1887.